Consider the following 277-residue polypeptide: Large ribosomal subunit protein uL2 (277 aa).

Disordered regions lie at residues 1–20 (MGIR…SVSD), 27–55 (TQPE…RHRG), and 207–277 (KAGR…RNQS). Over residues 27–48 (TQPEKSLTTYKHSSQGRNNRGV) the composition is skewed to polar residues. Composition is skewed to basic residues over residues 207 to 220 (KAGR…RPHV) and 259 to 277 (TRNR…RNQS).

This sequence belongs to the universal ribosomal protein uL2 family. As to quaternary structure, part of the 50S ribosomal subunit. Forms a bridge to the 30S subunit in the 70S ribosome.

In terms of biological role, one of the primary rRNA binding proteins. Required for association of the 30S and 50S subunits to form the 70S ribosome, for tRNA binding and peptide bond formation. It has been suggested to have peptidyltransferase activity; this is somewhat controversial. Makes several contacts with the 16S rRNA in the 70S ribosome. This chain is Large ribosomal subunit protein uL2, found in Gloeothece citriformis (strain PCC 7424) (Cyanothece sp. (strain PCC 7424)).